The following is a 796-amino-acid chain: MSESTGIPQGSPAVGAAGSAPAAPGVGGTECSGAAVGSARIAVKKAQLRSSPRPKKLEKLGVYSSCKAEGACKCNGWKSQNPPPTPPPPTPPRAEQPTAVSLMEPCRSCSHALGDHVTHLENVSEEEMNRLLGIVLDVEYLYTCVHKEEDPDTKQVYFSLFKLLRKCILQMGRPVVEALESPPFEKPSIEQGVNNFVQYKFSHLPSKERQTIVELAKMFLNQINYWQLETPSQKRQRAPDDDVAGYKVNYTRWLCYCNVPQFCDSLPRYEATQIFGRIFLRSVFTIMRKQLLEQARQEKDKLPPEKRTLILTHFPKFLSMLEEEVYSHNSPIWSENFMIGLSGGQIPTVVSAPPVNRSLYYSSSPAPVELAGGGSVSPARKTASVLEPNPGGEKRKPAEPLSHEDSKRPRVVGDIPMELINEVMSTITDPTAMLGPETSLLSAHSARDEAARLEERRGVIEFHVIGNSLNQKPNKKILMWLVGLQNVFSHQLPRMPKEYITRLVFDPKHKTLSLIKDGRVIGGICFRMFPTQGFTEIVFCAVTSNEQVKGYGTHLMNHLKEYHIKHEILNFLTYADEYAIGYFKKQGFSKDIKVPKSKYVGYIKDYEGATLMGCELNPCIPYTEFSVIIKKQKEIIKKLIERKQAQIRKVYPGLSCFKEGVRQIAIESIPGIRETGWKPLGKSKELKDPDQLYSTLKNILTQVKSHPNAWPFMEPVKKNEAPGYYQVIRFPMDLKTMSERLKSRYYTTRKLFMADMQRIFTNCREYNPPESEYYKCANLLEKFFYTKIKEAGLIDK.

Disordered stretches follow at residues 1–32, 77–97, and 371–408; these read MSES…TECS, WKSQ…AEQP, and AGGG…DSKR. Residues 10–24 are compositionally biased toward low complexity; the sequence is GSPAVGAAGSAPAAP. Residues 81–94 show a composition bias toward pro residues; the sequence is NPPPTPPPPTPPRA. The segment covering 392–408 has biased composition (basic and acidic residues); it reads GEKRKPAEPLSHEDSKR. One can recognise an N-acetyltransferase domain in the interval 469–617; that stretch reads LNQKPNKKIL…GATLMGCELN (149 aa). Glu-536 serves as the catalytic Proton donor/acceptor. Acetyl-CoA-binding positions include 540–542, 547–553, and 578–581; these read CAV, QVKGYGT, and YAIG. In terms of domain architecture, Bromo spans 687 to 791; the sequence is KDPDQLYSTL…KFFYTKIKEA (105 aa).

Belongs to the acetyltransferase family. GCN5 subfamily.

It is found in the nucleus. It localises to the cytoplasm. The protein localises to the cytoskeleton. The protein resides in the microtubule organizing center. Its subcellular location is the centrosome. It catalyses the reaction L-lysyl-[histone] + acetyl-CoA = N(6)-acetyl-L-lysyl-[histone] + CoA + H(+). The enzyme catalyses L-lysyl-[protein] + acetyl-CoA = N(6)-acetyl-L-lysyl-[protein] + CoA + H(+). It carries out the reaction spermidine + acetyl-CoA = N(8)-acetylspermidine + CoA + H(+). Functionally, functions as a histone acetyltransferase (HAT) to promote transcriptional activation. Has significant histone acetyltransferase activity with core histones (H3 and H4), and also with nucleosome core particles. Has a a strong preference for acetylation of H3 at 'Lys-9' (H3K9ac). Also acetylates non-histone proteins. Involved in heart and limb development by mediating acetylation of tbx5. Also acetylates spermidine. Together with kat2a, required for growth and differentiation of craniofacial cartilage and bone by regulating acetylation of histone H3 at 'Lys-9' (H3K9ac). The sequence is that of Histone acetyltransferase KAT2B from Danio rerio (Zebrafish).